The sequence spans 807 residues: Glycerol-3-phosphate acyltransferase (807 aa).

An HXXXXD motif motif is present at residues Cys305–Met310.

Belongs to the GPAT/DAPAT family.

The protein resides in the cell inner membrane. The enzyme catalyses sn-glycerol 3-phosphate + an acyl-CoA = a 1-acyl-sn-glycero-3-phosphate + CoA. It functions in the pathway phospholipid metabolism; CDP-diacylglycerol biosynthesis; CDP-diacylglycerol from sn-glycerol 3-phosphate: step 1/3. The chain is Glycerol-3-phosphate acyltransferase from Aliivibrio fischeri (strain ATCC 700601 / ES114) (Vibrio fischeri).